Here is a 650-residue protein sequence, read N- to C-terminus: Threonine--tRNA ligase (650 aa).

The 63-residue stretch at 3-65 (DLVKVTLPDG…DRDARLEIVT (63 aa)) folds into the TGS domain. The segment at 248-548 (DHRRLGPQLG…LTEHYAGAFP (301 aa)) is catalytic. Zn(2+)-binding residues include Cys-349, His-400, and His-525.

The protein belongs to the class-II aminoacyl-tRNA synthetase family. Homodimer. Zn(2+) serves as cofactor.

It localises to the cytoplasm. It carries out the reaction tRNA(Thr) + L-threonine + ATP = L-threonyl-tRNA(Thr) + AMP + diphosphate + H(+). Functionally, catalyzes the attachment of threonine to tRNA(Thr) in a two-step reaction: L-threonine is first activated by ATP to form Thr-AMP and then transferred to the acceptor end of tRNA(Thr). Also edits incorrectly charged L-seryl-tRNA(Thr). The polypeptide is Threonine--tRNA ligase (Anaeromyxobacter dehalogenans (strain 2CP-C)).